Here is a 429-residue protein sequence, read N- to C-terminus: Enolase (429 aa).

Gln-163 contacts (2R)-2-phosphoglycerate. Residue Glu-205 is the Proton donor of the active site. Mg(2+) contacts are provided by Asp-242, Glu-286, and Asp-313. 4 residues coordinate (2R)-2-phosphoglycerate: Lys-338, Arg-367, Ser-368, and Lys-389. Catalysis depends on Lys-338, which acts as the Proton acceptor.

The protein belongs to the enolase family. Mg(2+) serves as cofactor.

It localises to the cytoplasm. Its subcellular location is the secreted. The protein localises to the cell surface. The catalysed reaction is (2R)-2-phosphoglycerate = phosphoenolpyruvate + H2O. It participates in carbohydrate degradation; glycolysis; pyruvate from D-glyceraldehyde 3-phosphate: step 4/5. Its function is as follows. Catalyzes the reversible conversion of 2-phosphoglycerate (2-PG) into phosphoenolpyruvate (PEP). It is essential for the degradation of carbohydrates via glycolysis. In Thermoanaerobacter pseudethanolicus (strain ATCC 33223 / 39E) (Clostridium thermohydrosulfuricum), this protein is Enolase.